The following is a 357-amino-acid chain: MKVLAALALSALALAKPTPPMPGMSLIQTGPQETRWVTDAEKLELTMNNVGFFDITDMPVTASSVTKPKSYAFPGNVSHQADVKPLLGKLSSDHLMSNLQKFSDFPNRYYQADTGVQSAEWVLSQVQGVIGKIQGAKAEKIEHKWKQPSIRAIIPGKSEKIVVVGAHQDSINGQNPKAAAPGADDNGSGSMTILEALTALVSDQKIAGGQATNTIEFHWYAGEEAGLLGSQAVFQQYKQAGKEVVAMLNQDMTGYGKTMGIITDNSDSALTTFTKMILDTYTTAKYADSECGYACSDHASANKAGYPSAFVYEAVLGQDNPAIHSPDDTIDKLDPAKMLEHAKLVVGFAYELAFANL.

The first 15 residues, 1–15 (MKVLAALALSALALA), serve as a signal peptide directing secretion. Asn76 carries an N-linked (GlcNAc...) asparagine glycan. Zn(2+) is bound by residues His167 and Asp185. Asn186 is a glycosylation site (N-linked (GlcNAc...) asparagine). The Zn(2+) site is built by Glu224 and Asp251. Cys291 and Cys295 are oxidised to a cystine. Position 324 (His324) interacts with Zn(2+).

It belongs to the peptidase M28 family. M28E subfamily. As to quaternary structure, monomer. Zn(2+) serves as cofactor.

It localises to the secreted. Functionally, probable extracellular aminopeptidase which contributes to pathogenicity. The sequence is that of Probable leucine aminopeptidase MCYG_04170 from Arthroderma otae (strain ATCC MYA-4605 / CBS 113480) (Microsporum canis).